Here is a 275-residue protein sequence, read N- to C-terminus: 2,3,4,5-tetrahydropyridine-2,6-dicarboxylate N-succinyltransferase (275 aa).

Positions 106 and 143 each coordinate substrate.

The protein belongs to the transferase hexapeptide repeat family. Homotrimer.

It is found in the cytoplasm. It carries out the reaction (S)-2,3,4,5-tetrahydrodipicolinate + succinyl-CoA + H2O = (S)-2-succinylamino-6-oxoheptanedioate + CoA. It participates in amino-acid biosynthesis; L-lysine biosynthesis via DAP pathway; LL-2,6-diaminopimelate from (S)-tetrahydrodipicolinate (succinylase route): step 1/3. This chain is 2,3,4,5-tetrahydropyridine-2,6-dicarboxylate N-succinyltransferase, found in Pelagibacter ubique (strain HTCC1062).